We begin with the raw amino-acid sequence, 90 residues long: Protein LIM3 (90 aa).

A signal peptide spans 1–26; it reads MAAVKFLVCSVLLVVLATQSEIGLAQ. 4 disulfides stabilise this stretch: Cys-28–Cys-65, Cys-38–Cys-54, Cys-55–Cys-80, and Cys-67–Cys-87.

Belongs to the A9/FIL1 family.

The protein resides in the secreted. The polypeptide is Protein LIM3 (LIM3) (Lilium longiflorum (Trumpet lily)).